The chain runs to 434 residues: AT-rich interactive domain-containing protein 5 (434 aa).

Residues 1–120 (MMADTEMQEQ…SSPHVPEESV (120 aa)) form a disordered region. Composition is skewed to basic and acidic residues over residues 25–37 (ELEK…ERPK), 43–54 (DTTHTLDSDVHL), and 78–90 (RNGD…KKIT). The span at 92–102 (DGGQEETTLGE) shows a compositional bias: polar residues. Positions 142-233 (PQDQEAFIKE…ALLEYEKHLR (92 aa)) constitute an ARID domain. The segment at 237–274 (ELNLPGSASLPSSGIEKEASSHQASGSGRTRRDAAARA) is disordered. One can recognise a sHSP domain in the interval 336–434 (AEVIDVGPPA…RLFVRVPFEQ (99 aa)).

It belongs to the small heat shock protein (HSP20) family.

The protein localises to the nucleus. The polypeptide is AT-rich interactive domain-containing protein 5 (ARID5) (Arabidopsis thaliana (Mouse-ear cress)).